Here is a 344-residue protein sequence, read N- to C-terminus: Anthranilate phosphoribosyltransferase (344 aa).

5-phospho-alpha-D-ribose 1-diphosphate-binding positions include Gly-86, 89-90, Thr-94, 96-99, 114-122, and Ser-126; these read GD, NIST, and KHGNKSASG. Gly-86 is an anthranilate binding site. Residue Ser-98 coordinates Mg(2+). Asn-117 contributes to the anthranilate binding site. Arg-172 is an anthranilate binding site. Positions 231 and 232 each coordinate Mg(2+).

The protein belongs to the anthranilate phosphoribosyltransferase family. As to quaternary structure, homodimer. It depends on Mg(2+) as a cofactor.

The catalysed reaction is N-(5-phospho-beta-D-ribosyl)anthranilate + diphosphate = 5-phospho-alpha-D-ribose 1-diphosphate + anthranilate. It participates in amino-acid biosynthesis; L-tryptophan biosynthesis; L-tryptophan from chorismate: step 2/5. In terms of biological role, catalyzes the transfer of the phosphoribosyl group of 5-phosphorylribose-1-pyrophosphate (PRPP) to anthranilate to yield N-(5'-phosphoribosyl)-anthranilate (PRA). The polypeptide is Anthranilate phosphoribosyltransferase (Prochlorococcus marinus (strain AS9601)).